Here is a 682-residue protein sequence, read N- to C-terminus: Potassium-transporting ATPase ATP-binding subunit (682 aa).

Transmembrane regions (helical) follow at residues 35-55 (VMFI…AMAG), 62-82 (ATFT…ANFA), 219-239 (IALT…TATI), and 254-274 (VLVA…LSAI). Catalysis depends on Asp-307, which acts as the 4-aspartylphosphate intermediate. Residues Asp-344, Glu-348, 377-384 (FTAQTRMS), and Lys-395 each bind ATP. Mg(2+)-binding residues include Asp-518 and Asp-522. 3 helical membrane-spanning segments follow: residues 588 to 608 (FAII…LNVM), 616 to 636 (AILS…PLAL), and 656 to 676 (IYGL…DLLL).

This sequence belongs to the cation transport ATPase (P-type) (TC 3.A.3) family. Type IA subfamily. The system is composed of three essential subunits: KdpA, KdpB and KdpC.

It localises to the cell inner membrane. It carries out the reaction K(+)(out) + ATP + H2O = K(+)(in) + ADP + phosphate + H(+). Functionally, part of the high-affinity ATP-driven potassium transport (or Kdp) system, which catalyzes the hydrolysis of ATP coupled with the electrogenic transport of potassium into the cytoplasm. This subunit is responsible for energy coupling to the transport system and for the release of the potassium ions to the cytoplasm. In Klebsiella pneumoniae (strain 342), this protein is Potassium-transporting ATPase ATP-binding subunit.